The primary structure comprises 937 residues: Protein translocase subunit SecA (937 aa).

ATP-binding positions include glutamine 86, glycine 104–threonine 108, and aspartate 493. The tract at residues leucine 868–glutamate 889 is disordered. Residues cysteine 911, cysteine 913, cysteine 922, and histidine 923 each coordinate Zn(2+). A disordered region spans residues serine 915 to serine 937.

The protein belongs to the SecA family. In terms of assembly, monomer and homodimer. Part of the essential Sec protein translocation apparatus which comprises SecA, SecYEG and auxiliary proteins SecDF. Other proteins may also be involved. Zn(2+) serves as cofactor.

It localises to the cell membrane. The protein localises to the cytoplasm. The enzyme catalyses ATP + H2O + cellular proteinSide 1 = ADP + phosphate + cellular proteinSide 2.. In terms of biological role, part of the Sec protein translocase complex. Interacts with the SecYEG preprotein conducting channel. Has a central role in coupling the hydrolysis of ATP to the transfer of proteins into and across the cell membrane, serving as an ATP-driven molecular motor driving the stepwise translocation of polypeptide chains across the membrane. The sequence is that of Protein translocase subunit SecA from Nocardioides sp. (strain ATCC BAA-499 / JS614).